The following is a 382-amino-acid chain: Type II secretion system protein L (382 aa).

Over 1 to 233 (MSGVSALFLP…QQSSQWRRWR (233 aa)) the chain is Cytoplasmic. Residues 234-254 (PLLGLVGLWLVLQWGFTLVQA) traverse the membrane as a helical segment. The Periplasmic portion of the chain corresponds to 255-382 (WQLQREGDRY…TVSARLVIGG (128 aa)).

Belongs to the GSP L family. As to quaternary structure, type II secretion system is composed of four main components: the outer membrane complex, the inner membrane complex, the cytoplasmic secretion ATPase and the periplasm-spanning pseudopilus. Forms homodimers. Interacts with XcpZ/GspM. Interacts with XcpR/GspE and XcpS/GspF.

It is found in the cell inner membrane. Inner membrane component of the type II secretion system required for the energy-dependent secretion of extracellular factors such as proteases and toxins from the periplasm. Plays a role in the complex assembly and recruits XcpZ resulting in a stable complex in the inner membrane. Provides thus a link between the energy-providing XcpR protein in the cytoplasm and the rest of the T2SS machinery. The sequence is that of Type II secretion system protein L (xcpY) from Pseudomonas aeruginosa (strain ATCC 15692 / DSM 22644 / CIP 104116 / JCM 14847 / LMG 12228 / 1C / PRS 101 / PAO1).